The following is a 501-amino-acid chain: MSSPAQPEVPAPLANLKIQYTKIFINNEWHDSVSGKKFPVINPATEEVICHVEEGDKADIDKAVKAARQAFQIGSPWRTMDASERGRLLYKLADLMERDRLLLATLEATNGGKVFASSYLFDLGGCIKALKYCAGWADKVHGQTIPSDGDIFTYTRREPIGVCGQIIPWNFPLLMFIWKIGPALGCGNTVIVKPAEQTPLTALYMASLIKEAGFPPGVVNIVPGYGPTAGAAISSHMDIDKVAFTGSTQVGKLIKEAAGKSNLKRVTLELGGKSPCIVFADADLDTAVEFAHYGVFYHQGQCCVAASRLFVEESIYDEFVRRSVERAKKYVLGNPLNSGINQGPQIDKEQHDKILDLIESGKKEGAKLECGGGRWGNKGYFVQPTVFSNVTDDMRIAKEEIFGPVQQIMKFKSLDDVIKRANNTSYGLAAGVFTKDLDKAITVSSALQAGVVWVNCYMMLSAQCPFGGFKMSGNGRELGEHGIYEYTELKTVAIKISQKNS.

S2 carries the N-acetylserine modification. K91 and K128 each carry N6-acetyllysine. Residues 167–170, 193–196, 226–227, and 246–247 contribute to the NAD(+) site; these read IPWN, KPAE, GP, and GS. An N6-acetyllysine modification is found at K252. E269 acts as the Proton acceptor in catalysis. 269-271 is a binding site for NAD(+); the sequence is ELG. The active-site Nucleophile is C303. The interval 336 to 501 is mediates interaction with PRMT3; that stretch reads LNSGINQGPQ…VAIKISQKNS (166 aa). 349–353 contributes to the NAD(+) binding site; sequence EQHDK. N6-acetyllysine occurs at positions 353 and 367. NAD(+) is bound at residue 400-402; that stretch reads EIF. An N6-acetyllysine modification is found at K410. S413 is subject to Phosphoserine. N6-acetyllysine occurs at positions 419, 435, and 495.

This sequence belongs to the aldehyde dehydrogenase family. As to quaternary structure, homotetramer. Interacts with PRMT3; the interaction is direct, inhibits ALDH1A1 aldehyde dehydrogenase activity and is independent of the methyltransferase activity of PRMT3. In terms of processing, the N-terminus is blocked most probably by acetylation.

It localises to the cytoplasm. It is found in the cytosol. The protein resides in the cell projection. Its subcellular location is the axon. The enzyme catalyses an aldehyde + NAD(+) + H2O = a carboxylate + NADH + 2 H(+). The catalysed reaction is all-trans-retinal + NAD(+) + H2O = all-trans-retinoate + NADH + 2 H(+). It catalyses the reaction 9-cis-retinal + NAD(+) + H2O = 9-cis-retinoate + NADH + 2 H(+). It carries out the reaction 11-cis-retinal + NAD(+) + H2O = 11-cis-retinoate + NADH + 2 H(+). The enzyme catalyses 13-cis-retinal + NAD(+) + H2O = 13-cis-retinoate + NADH + 2 H(+). The catalysed reaction is 3-deoxyglucosone + NAD(+) + H2O = 2-dehydro-3-deoxy-D-gluconate + NADH + 2 H(+). It catalyses the reaction (E)-4-hydroxynon-2-enal + NAD(+) + H2O = (E)-4-hydroxynon-2-enoate + NADH + 2 H(+). It carries out the reaction malonaldehyde + NAD(+) + H2O = 3-oxopropanoate + NADH + 2 H(+). The enzyme catalyses hexanal + NAD(+) + H2O = hexanoate + NADH + 2 H(+). The catalysed reaction is propanal + NAD(+) + H2O = propanoate + NADH + 2 H(+). It catalyses the reaction acetaldehyde + NAD(+) + H2O = acetate + NADH + 2 H(+). It carries out the reaction benzaldehyde + NAD(+) + H2O = benzoate + NADH + 2 H(+). The enzyme catalyses 4-aminobutanal + NAD(+) + H2O = 4-aminobutanoate + NADH + 2 H(+). It functions in the pathway cofactor metabolism; retinol metabolism. Cytosolic dehydrogenase that catalyzes the irreversible oxidation of a wide range of aldehydes to their corresponding carboxylic acid. Functions downstream of retinol dehydrogenases and catalyzes the oxidation of retinaldehyde into retinoic acid, the second step in the oxidation of retinol/vitamin A into retinoic acid. This pathway is crucial to control the levels of retinol and retinoic acid, two important molecules which excess can be teratogenic and cytotoxic. Also oxidizes aldehydes resulting from lipid peroxidation like (E)-4-hydroxynon-2-enal/HNE, malonaldehyde and hexanal that form protein adducts and are highly cytotoxic. By participating for instance to the clearance of (E)-4-hydroxynon-2-enal/HNE in the lens epithelium prevents the formation of HNE-protein adducts and lens opacification. Also functions downstream of fructosamine-3-kinase in the fructosamine degradation pathway by catalyzing the oxidation of 3-deoxyglucosone, the carbohydrate product of fructosamine 3-phosphate decomposition, which is itself a potent glycating agent that may react with lysine and arginine side-chains of proteins. Also has an aminobutyraldehyde dehydrogenase activity and is probably part of an alternative pathway for the biosynthesis of GABA/4-aminobutanoate in midbrain, thereby playing a role in GABAergic synaptic transmission. The protein is Aldehyde dehydrogenase 1A1 of Mesocricetus auratus (Golden hamster).